The sequence spans 105 residues: TMEM14 protein homolog YJR085C (105 aa).

3 helical membrane passes run 26–46 (IPSL…GYLL), 53–73 (GLEM…IRGM), and 77–97 (FTKP…YYYY).

Belongs to the TMEM14 family.

The protein resides in the mitochondrion. It localises to the membrane. The chain is TMEM14 protein homolog YJR085C from Saccharomyces cerevisiae (strain ATCC 204508 / S288c) (Baker's yeast).